Consider the following 298-residue polypeptide: ATP synthase gamma chain (298 aa).

This sequence belongs to the ATPase gamma chain family. As to quaternary structure, F-type ATPases have 2 components, CF(1) - the catalytic core - and CF(0) - the membrane proton channel. CF(1) has five subunits: alpha(3), beta(3), gamma(1), delta(1), epsilon(1). CF(0) has three main subunits: a, b and c.

Its subcellular location is the cell inner membrane. Produces ATP from ADP in the presence of a proton gradient across the membrane. The gamma chain is believed to be important in regulating ATPase activity and the flow of protons through the CF(0) complex. This is ATP synthase gamma chain from Acidithiobacillus ferridurans.